A 388-amino-acid polypeptide reads, in one-letter code: Succinate--CoA ligase [ADP-forming] subunit beta (388 aa).

The region spanning 9–244 is the ATP-grasp domain; sequence KQLFARYGLP…QSQEDPRAAQ (236 aa). ATP contacts are provided by residues K46, 53–55, E99, T102, and E107; that span reads GRG. Mg(2+) is bound by residues N199 and D213. Substrate-binding positions include N264 and 321–323; that span reads GIV.

Belongs to the succinate/malate CoA ligase beta subunit family. Heterotetramer of two alpha and two beta subunits. The cofactor is Mg(2+).

The enzyme catalyses succinate + ATP + CoA = succinyl-CoA + ADP + phosphate. It carries out the reaction GTP + succinate + CoA = succinyl-CoA + GDP + phosphate. It functions in the pathway carbohydrate metabolism; tricarboxylic acid cycle; succinate from succinyl-CoA (ligase route): step 1/1. Functionally, succinyl-CoA synthetase functions in the citric acid cycle (TCA), coupling the hydrolysis of succinyl-CoA to the synthesis of either ATP or GTP and thus represents the only step of substrate-level phosphorylation in the TCA. The beta subunit provides nucleotide specificity of the enzyme and binds the substrate succinate, while the binding sites for coenzyme A and phosphate are found in the alpha subunit. The protein is Succinate--CoA ligase [ADP-forming] subunit beta of Shigella flexneri serotype 5b (strain 8401).